Reading from the N-terminus, the 297-residue chain is N-acetylneuraminate lyase (297 aa).

Aceneuramate contacts are provided by S47 and T48. Y137 acts as the Proton donor in catalysis. K165 serves as the catalytic Schiff-base intermediate with substrate. Positions 167, 189, 191, 192, and 208 each coordinate aceneuramate.

Belongs to the DapA family. NanA subfamily. As to quaternary structure, homotetramer.

The protein resides in the cytoplasm. The catalysed reaction is aceneuramate = aldehydo-N-acetyl-D-mannosamine + pyruvate. It functions in the pathway amino-sugar metabolism; N-acetylneuraminate degradation; D-fructose 6-phosphate from N-acetylneuraminate: step 1/5. In terms of biological role, catalyzes the reversible aldol cleavage of N-acetylneuraminic acid (sialic acid; Neu5Ac) to form pyruvate and N-acetylmannosamine (ManNAc) via a Schiff base intermediate. This chain is N-acetylneuraminate lyase, found in Shigella boydii serotype 4 (strain Sb227).